The sequence spans 71 residues: Exodeoxyribonuclease 7 small subunit (71 aa).

The protein belongs to the XseB family. As to quaternary structure, heterooligomer composed of large and small subunits.

Its subcellular location is the cytoplasm. The enzyme catalyses Exonucleolytic cleavage in either 5'- to 3'- or 3'- to 5'-direction to yield nucleoside 5'-phosphates.. In terms of biological role, bidirectionally degrades single-stranded DNA into large acid-insoluble oligonucleotides, which are then degraded further into small acid-soluble oligonucleotides. The protein is Exodeoxyribonuclease 7 small subunit of Clostridium botulinum (strain Kyoto / Type A2).